The chain runs to 224 residues: Superoxide dismutase [Mn], mitochondrial (224 aa).

Residues Met1 to Gln20 constitute a mitochondrion transit peptide. Mn(2+) contacts are provided by His46, His94, Asp177, and His181.

The protein belongs to the iron/manganese superoxide dismutase family. As to quaternary structure, homotetramer. The cofactor is Mn(2+).

It localises to the mitochondrion matrix. The enzyme catalyses 2 superoxide + 2 H(+) = H2O2 + O2. Its function is as follows. Destroys superoxide anion radicals which are normally produced within the cells and which are toxic to biological systems. The polypeptide is Superoxide dismutase [Mn], mitochondrial (Charybdis feriata (Crucifix crab)).